Consider the following 492-residue polypeptide: Ribose import ATP-binding protein RbsA (492 aa).

ABC transporter domains follow at residues 3–239 and 238–492; these read IDMR…VGRK and RKLE…TGGK. 35-42 provides a ligand contact to ATP; the sequence is GENGAGKS.

Belongs to the ABC transporter superfamily. Ribose importer (TC 3.A.1.2.1) family. As to quaternary structure, the complex is composed of an ATP-binding protein (RbsA), two transmembrane proteins (RbsC) and a solute-binding protein (RbsB).

It is found in the cell membrane. It catalyses the reaction D-ribose(out) + ATP + H2O = D-ribose(in) + ADP + phosphate + H(+). Functionally, part of the ABC transporter complex RbsABC involved in ribose import. Responsible for energy coupling to the transport system. This is Ribose import ATP-binding protein RbsA from Streptococcus agalactiae serotype V (strain ATCC BAA-611 / 2603 V/R).